The following is a 568-amino-acid chain: Pyruvate carboxylase subunit B (568 aa).

The Pyruvate carboxyltransferase domain maps to 4–264 (IKVVETAFRD…DTGLDLEILK (261 aa)). Substrate contacts are provided by residues 12–16 (RDAHQ) and Arg-83. Residue Asp-13 coordinates a divalent metal cation. A divalent metal cation is bound by residues Lys-174, His-203, and His-205. Lys-174 is subject to N6-carboxylysine. Position 339 (Thr-339) interacts with substrate. A Biotinyl-binding domain is found at 493-568 (PEPVDVEGAV…ETGDIIMVIK (76 aa)). The residue at position 534 (Lys-534) is an N6-biotinyllysine.

As to quaternary structure, heterooctamer of four A and four B subunits. Mg(2+) serves as cofactor. Mn(2+) is required as a cofactor. It depends on Co(2+) as a cofactor.

It catalyses the reaction hydrogencarbonate + pyruvate + ATP = oxaloacetate + ADP + phosphate + H(+). Inhibited by ADP and alpha-ketoglutarate. Functionally, pyruvate carboxylase catalyzes a 2-step reaction, involving the ATP-dependent carboxylation of the covalently attached biotin in the first step and the transfer of the carboxyl group to pyruvate in the second. The protein is Pyruvate carboxylase subunit B (pycB) of Methanothermobacter thermautotrophicus (strain ATCC 29096 / DSM 1053 / JCM 10044 / NBRC 100330 / Delta H) (Methanobacterium thermoautotrophicum).